A 304-amino-acid polypeptide reads, in one-letter code: Pseudouridine-5'-phosphate glycosidase (304 aa).

The active-site Proton donor is Glu-25. Residues Lys-88 and Val-108 each coordinate substrate. Position 140 (Asp-140) interacts with Mn(2+). 142 to 144 (SAD) lines the substrate pocket. Residue Lys-161 is the Nucleophile of the active site.

This sequence belongs to the pseudouridine-5'-phosphate glycosidase family. In terms of assembly, homotrimer. Requires Mn(2+) as cofactor.

It catalyses the reaction D-ribose 5-phosphate + uracil = psi-UMP + H2O. Its function is as follows. Catalyzes the reversible cleavage of pseudouridine 5'-phosphate (PsiMP) to ribose 5-phosphate and uracil. Functions biologically in the cleavage direction, as part of a pseudouridine degradation pathway. The chain is Pseudouridine-5'-phosphate glycosidase from Paracoccus denitrificans (strain Pd 1222).